We begin with the raw amino-acid sequence, 636 residues long: PTS system beta-glucoside-specific EIIBCA component (636 aa).

A PTS EIIB type-1 domain is found at 1–86 (MKYEQLAKDI…VEIGGFQNQA (86 aa)). C26 functions as the Phosphocysteine intermediate; for EIIB activity in the catalytic mechanism. A run of 10 helical transmembrane segments spans residues 104–124 (IDII…TGMI), 146–166 (LLHA…GYTA), 172–192 (ATPF…LVVL), 215–235 (FLGI…IILA), 258–278 (LVPF…IGPI), 299–319 (IIAG…GLHW), 337–357 (VLAM…AVWL), 369–389 (VPAF…GVTL), 407–427 (AIIG…IFGI), and 444–464 (IVIA…LFGL). The PTS EIIC type-1 domain maps to 105–476 (DIIASIFTPV…GNASDEQTET (372 aa)). Residues 472–492 (EQTETKAHTSTGTGEKEEISS) form a disordered region. Positions 506–610 (DEAFSSGALG…AVTTPVIVTN (105 aa)) constitute a PTS EIIA type-1 domain. H558 acts as the Tele-phosphohistidine intermediate; for EIIA activity in catalysis.

The protein resides in the cell membrane. Functionally, the phosphoenolpyruvate-dependent sugar phosphotransferase system (sugar PTS), a major carbohydrate active -transport system, catalyzes the phosphorylation of incoming sugar substrates concomitantly with their translocation across the cell membrane. This system is involved in beta-glucoside transport. The polypeptide is PTS system beta-glucoside-specific EIIBCA component (bglP) (Halalkalibacterium halodurans (strain ATCC BAA-125 / DSM 18197 / FERM 7344 / JCM 9153 / C-125) (Bacillus halodurans)).